A 311-amino-acid chain; its full sequence is Putative ribose-phosphate pyrophosphokinase 2 (311 aa).

ATP contacts are provided by residues 38–40 and 97–98; these read DGE and RQ. Mg(2+)-binding residues include histidine 131 and aspartate 171. D-ribose 5-phosphate is bound at residue aspartate 219.

This sequence belongs to the ribose-phosphate pyrophosphokinase family. Class I subfamily. In terms of assembly, homohexamer. Requires Mg(2+) as cofactor.

The protein localises to the cytoplasm. The catalysed reaction is D-ribose 5-phosphate + ATP = 5-phospho-alpha-D-ribose 1-diphosphate + AMP + H(+). The protein operates within metabolic intermediate biosynthesis; 5-phospho-alpha-D-ribose 1-diphosphate biosynthesis; 5-phospho-alpha-D-ribose 1-diphosphate from D-ribose 5-phosphate (route I): step 1/1. Functionally, involved in the biosynthesis of the central metabolite phospho-alpha-D-ribosyl-1-pyrophosphate (PRPP) via the transfer of pyrophosphoryl group from ATP to 1-hydroxyl of ribose-5-phosphate (Rib-5-P). In Listeria monocytogenes serotype 4b (strain F2365), this protein is Putative ribose-phosphate pyrophosphokinase 2.